The chain runs to 318 residues: Pantothenate kinase (318 aa).

96–103 (GSVAVGKS) is an ATP binding site.

This sequence belongs to the prokaryotic pantothenate kinase family.

It localises to the cytoplasm. It catalyses the reaction (R)-pantothenate + ATP = (R)-4'-phosphopantothenate + ADP + H(+). It participates in cofactor biosynthesis; coenzyme A biosynthesis; CoA from (R)-pantothenate: step 1/5. The polypeptide is Pantothenate kinase (Rhodopseudomonas palustris (strain BisA53)).